The primary structure comprises 249 residues: Sugar fermentation stimulation protein homolog (249 aa).

It belongs to the SfsA family.

The sequence is that of Sugar fermentation stimulation protein homolog from Prochlorococcus marinus (strain MIT 9515).